Reading from the N-terminus, the 537-residue chain is Apoptosis inhibitor 5-like protein API5 (537 aa).

The ARM-like and Heat-like helical repeats stretch occupies residues 9 to 363 (AEVERLYELG…TTNSLCGYKI (355 aa)). A disordered region spans residues 465-537 (WMEQPKKPAP…GGRGRGWGYR (73 aa)). Polar residues predominate over residues 474-492 (PTTTGGKRSQPATNGNTPA).

The protein belongs to the API5 family. In terms of assembly, interacts with AIP1 and AIP2.

The protein localises to the nucleus. Its function is as follows. Putative anti-apoptotic factor involved in the regulation of tapetal programmed cell death (PCD) and degeneration during anther development. Interacts directly with the DEAD-box ATP-dependent RNA helicases AIP1 and AIP2 that form dimers and bind the promoter region of the cysteine protease CP1 involved in tapetum PCD. The sequence is that of Apoptosis inhibitor 5-like protein API5 from Oryza sativa subsp. japonica (Rice).